The following is a 90-amino-acid chain: Auxin-responsive protein SAUR23 (90 aa).

It belongs to the ARG7 family.

Its subcellular location is the cell membrane. In terms of biological role, functions as a positive effector of cell expansion through modulation of auxin transport. In Arabidopsis thaliana (Mouse-ear cress), this protein is Auxin-responsive protein SAUR23.